The sequence spans 437 residues: Aspartate--tRNA(Asp/Asn) ligase (437 aa).

L-aspartate is bound at residue E175. Positions 197-200 (QLYK) are aspartate. R219 is a binding site for L-aspartate. ATP contacts are provided by residues 219–221 (RAE), 227–229 (RHL), and E360. Residues E360 and S363 each coordinate Mg(2+). Residues S363 and R367 each contribute to the L-aspartate site. 408–411 (GAER) provides a ligand contact to ATP.

The protein belongs to the class-II aminoacyl-tRNA synthetase family. Type 2 subfamily. In terms of assembly, homodimer. Mg(2+) is required as a cofactor.

It localises to the cytoplasm. The enzyme catalyses tRNA(Asx) + L-aspartate + ATP = L-aspartyl-tRNA(Asx) + AMP + diphosphate. Its function is as follows. Aspartyl-tRNA synthetase with relaxed tRNA specificity since it is able to aspartylate not only its cognate tRNA(Asp) but also tRNA(Asn). Reaction proceeds in two steps: L-aspartate is first activated by ATP to form Asp-AMP and then transferred to the acceptor end of tRNA(Asp/Asn). The sequence is that of Aspartate--tRNA(Asp/Asn) ligase from Methanothermobacter thermautotrophicus (strain ATCC 29096 / DSM 1053 / JCM 10044 / NBRC 100330 / Delta H) (Methanobacterium thermoautotrophicum).